We begin with the raw amino-acid sequence, 511 residues long: Cobyric acid synthase (511 aa).

Residues 251-443 (LLDIAIICLP…IHGIFDNDVF (193 aa)) form the GATase cobBQ-type domain. C332 (nucleophile) is an active-site residue. H435 is a catalytic residue.

This sequence belongs to the CobB/CobQ family. CobQ subfamily.

It participates in cofactor biosynthesis; adenosylcobalamin biosynthesis. Functionally, catalyzes amidations at positions B, D, E, and G on adenosylcobyrinic A,C-diamide. NH(2) groups are provided by glutamine, and one molecule of ATP is hydrogenolyzed for each amidation. The protein is Cobyric acid synthase of Listeria monocytogenes serotype 4b (strain F2365).